The following is a 96-amino-acid chain: Putative pterin-4-alpha-carbinolamine dehydratase (96 aa).

This sequence belongs to the pterin-4-alpha-carbinolamine dehydratase family.

It catalyses the reaction (4aS,6R)-4a-hydroxy-L-erythro-5,6,7,8-tetrahydrobiopterin = (6R)-L-erythro-6,7-dihydrobiopterin + H2O. The protein is Putative pterin-4-alpha-carbinolamine dehydratase of Prochlorococcus marinus (strain MIT 9215).